Here is a 1722-residue protein sequence, read N- to C-terminus: Leucine-rich repeat- and IQ domain-containing protein 1 (1722 aa).

Disordered stretches follow at residues 23 to 47, 182 to 202, 265 to 285, and 319 to 367; these read SLEK…TDSV, EDKE…QFQE, RTRF…QQNN, and QEWK…YEEK. Residues 38-47 are compositionally biased toward acidic residues; that stretch reads QSDDSDTDSV. The segment covering 265 to 278 has biased composition (basic and acidic residues); it reads RTRFKDQQEKEKNS. Residues 283–312 form the IQ 1 domain; it reads QNNAAVKIQAKYKAFVAYQKYGPIIKEQIE. 10 LRR repeats span residues 819–840, 841–861, 862–883, 884–905, 970–991, 992–1013, 1014–1035, 1036–1057, 1060–1081, and 1082–1103; these read NLQF…SNCK, KLKY…ENLE, NLCV…DGCT, NIQC…FFLE, NLQQ…CDTP, TIVY…ENCG, LLQI…ENLV, LLRE…SSYW, LLQN…FHFV, and SLEK…IKWF. The LRRCT domain maps to 1117–1157; that stretch reads NPLLQETNWRDSLLKVLPALRILNGNILNSNSESRTEEHNQ. 2 consecutive IQ domains span residues 1335–1364 and 1395–1424; these read KIMA…LHTA and REKA…AIKN. The segment covering 1506 to 1524 has biased composition (polar residues); the sequence is SEHTQFNSRSENKTSSWTP. Residues 1506-1534 form a disordered region; sequence SEHTQFNSRSENKTSSWTPESKTSRKSLL.

This chain is Leucine-rich repeat- and IQ domain-containing protein 1 (LRRIQ1), found in Homo sapiens (Human).